The chain runs to 1547 residues: DNA topoisomerase 2 (1547 aa).

A disordered region spans residues 8–30 (FNKMSSPKQNGTGEPAPAKGQKG). Over residues 9–19 (NKMSSPKQNGT) the composition is skewed to polar residues. ATP-binding positions include N99, N128, 156-158 (SSN), and 169-176 (GRNGYGAK). Residues 351–353 (KKK) are interaction with DNA. 385–387 (QTK) serves as a coordination point for ATP. One can recognise a Toprim domain in the interval 463–580 (CTLILTEGDS…ELLKLPFLEE (118 aa)). Residues E469, D549, and D551 each coordinate Mg(2+). The 470-residue stretch at 723–1192 (IPSMIDGLKP…TAPMLWREDL (470 aa)) folds into the Topo IIA-type catalytic domain. Residue Y813 is the O-(5'-phospho-DNA)-tyrosine intermediate of the active site. The tract at residues 996 to 1005 (KLQTTISMTC) is interaction with DNA. 4 disordered regions span residues 1107-1134 (TALE…VDPD), 1209-1249 (EELN…ISDD), 1261-1423 (KTRK…MDSD), and 1459-1547 (RQRR…SLSD). Residues 1109 to 1123 (LEDDDAQESEEEEPE) are compositionally biased toward acidic residues. The segment covering 1124 to 1134 (PDPKGKPVDPD) has biased composition (basic and acidic residues). Over residues 1216–1228 (KTSKAMAGKKNRK) the composition is skewed to basic residues. Basic and acidic residues-rich tracts occupy residues 1238 to 1249 (NGRRVEPKISDD) and 1294 to 1315 (EKPE…DGLK). Positions 1331–1344 (TFSGSSSGEMSASD) are enriched in low complexity. Over residues 1373–1383 (DDSGSDSEPEL) the composition is skewed to acidic residues. Composition is skewed to basic and acidic residues over residues 1384–1394 (LDNKIDSDHEA) and 1459–1488 (RQRR…DEKK). A compositionally biased stretch (basic residues) spans 1513 to 1528 (KGKKKTAANPKKKAKK). The span at 1537 to 1547 (DFNISDSSLSD) shows a compositional bias: polar residues.

It belongs to the type II topoisomerase family. Homodimer. Mg(2+) serves as cofactor. Mn(2+) is required as a cofactor. It depends on Ca(2+) as a cofactor.

The protein localises to the nucleus. It carries out the reaction ATP-dependent breakage, passage and rejoining of double-stranded DNA.. Control of topological states of DNA by transient breakage and subsequent rejoining of DNA strands. Topoisomerase II makes double-strand breaks. The sequence is that of DNA topoisomerase 2 (TOP2) from Bombyx mori (Silk moth).